The primary structure comprises 103 residues: Histone H4 (103 aa).

Position 6 is an N6-acetyl-N6-methyllysine; alternate (K6). 3 positions are modified to N6-methyllysine; alternate: K6, K9, and K13. K13 is subject to N6-acetyl-N6-methyllysine; alternate. A DNA-binding region spans residues 17–21 (KRHRK). K92 is modified (N6-glutaryllysine).

The protein belongs to the histone H4 family. The nucleosome is a histone octamer containing two molecules each of H2A, H2B, H3 and H4 assembled in one H3-H4 heterotetramer and two H2A-H2B heterodimers. The octamer wraps approximately 147 bp of DNA. Post-translationally, glutarylation at Lys-92 (H4K91glu) destabilizes nucleosomes by promoting dissociation of the H2A-H2B dimers from nucleosomes.

The protein resides in the nucleus. It localises to the chromosome. In terms of biological role, core component of nucleosome. Nucleosomes wrap and compact DNA into chromatin, limiting DNA accessibility to the cellular machineries which require DNA as a template. Histones thereby play a central role in transcription regulation, DNA repair, DNA replication and chromosomal stability. DNA accessibility is regulated via a complex set of post-translational modifications of histones, also called histone code, and nucleosome remodeling. The polypeptide is Histone H4 (ahsb4) (Blastobotrys adeninivorans (Yeast)).